The sequence spans 594 residues: NADH-quinone oxidoreductase subunit C/D (594 aa).

Positions 1–185 (MTTGSALYIP…DPFSLNLAKQ (185 aa)) are NADH dehydrogenase I subunit C. The NADH dehydrogenase I subunit D stretch occupies residues 209-594 (DYMFLNLGPN…IDFVMADVDR (386 aa)).

The protein in the N-terminal section; belongs to the complex I 30 kDa subunit family. It in the C-terminal section; belongs to the complex I 49 kDa subunit family. NDH-1 is composed of 13 different subunits. Subunits NuoB, CD, E, F, and G constitute the peripheral sector of the complex.

The protein localises to the cell inner membrane. The enzyme catalyses a quinone + NADH + 5 H(+)(in) = a quinol + NAD(+) + 4 H(+)(out). Its function is as follows. NDH-1 shuttles electrons from NADH, via FMN and iron-sulfur (Fe-S) centers, to quinones in the respiratory chain. The immediate electron acceptor for the enzyme in this species is believed to be ubiquinone. Couples the redox reaction to proton translocation (for every two electrons transferred, four hydrogen ions are translocated across the cytoplasmic membrane), and thus conserves the redox energy in a proton gradient. This chain is NADH-quinone oxidoreductase subunit C/D, found in Pseudomonas fluorescens (strain Pf0-1).